The primary structure comprises 210 residues: Imidazoleglycerol-phosphate dehydratase (210 aa).

This sequence belongs to the imidazoleglycerol-phosphate dehydratase family.

It is found in the cytoplasm. It catalyses the reaction D-erythro-1-(imidazol-4-yl)glycerol 3-phosphate = 3-(imidazol-4-yl)-2-oxopropyl phosphate + H2O. Its pathway is amino-acid biosynthesis; L-histidine biosynthesis; L-histidine from 5-phospho-alpha-D-ribose 1-diphosphate: step 6/9. The protein is Imidazoleglycerol-phosphate dehydratase of Mycobacterium marinum (strain ATCC BAA-535 / M).